Consider the following 204-residue polypeptide: Peptide deformylase (204 aa).

Residues Cys131 and His174 each contribute to the Fe cation site. The active site involves Glu175. A Fe cation-binding site is contributed by His178.

This sequence belongs to the polypeptide deformylase family. Requires Fe(2+) as cofactor.

It catalyses the reaction N-terminal N-formyl-L-methionyl-[peptide] + H2O = N-terminal L-methionyl-[peptide] + formate. Its function is as follows. Removes the formyl group from the N-terminal Met of newly synthesized proteins. Requires at least a dipeptide for an efficient rate of reaction. N-terminal L-methionine is a prerequisite for activity but the enzyme has broad specificity at other positions. The sequence is that of Peptide deformylase from Streptococcus agalactiae serotype III (strain NEM316).